The following is a 128-amino-acid chain: Large ribosomal subunit protein bL19 (128 aa).

Belongs to the bacterial ribosomal protein bL19 family.

In terms of biological role, this protein is located at the 30S-50S ribosomal subunit interface and may play a role in the structure and function of the aminoacyl-tRNA binding site. The chain is Large ribosomal subunit protein bL19 from Herminiimonas arsenicoxydans.